Here is a 221-residue protein sequence, read N- to C-terminus: ATP synthase subunit a 1 (221 aa).

5 consecutive transmembrane segments (helical) span residues Leu-20–Thr-40, Tyr-78–Ile-98, Leu-108–Ala-128, Met-174–Leu-194, and Leu-196–Ala-216.

The protein belongs to the ATPase A chain family. F-type ATPases have 2 components, CF(1) - the catalytic core - and CF(0) - the membrane proton channel. CF(1) has five subunits: alpha(3), beta(3), gamma(1), delta(1), epsilon(1). CF(0) has four main subunits: a, b, b' and c.

The protein resides in the cell inner membrane. Functionally, key component of the proton channel; it plays a direct role in the translocation of protons across the membrane. This chain is ATP synthase subunit a 1, found in Chlorobaculum tepidum (strain ATCC 49652 / DSM 12025 / NBRC 103806 / TLS) (Chlorobium tepidum).